A 255-amino-acid chain; its full sequence is 4-hydroxy-tetrahydrodipicolinate reductase (255 aa).

NAD(+) is bound by residues 9-14 (GFKGKM), 89-91 (GTT), and 115-118 (APNF). His-145 functions as the Proton donor/acceptor in the catalytic mechanism. A (S)-2,3,4,5-tetrahydrodipicolinate-binding site is contributed by His-146. Catalysis depends on Lys-149, which acts as the Proton donor. 155 to 156 (GT) contacts (S)-2,3,4,5-tetrahydrodipicolinate.

This sequence belongs to the DapB family.

Its subcellular location is the cytoplasm. The enzyme catalyses (S)-2,3,4,5-tetrahydrodipicolinate + NAD(+) + H2O = (2S,4S)-4-hydroxy-2,3,4,5-tetrahydrodipicolinate + NADH + H(+). It catalyses the reaction (S)-2,3,4,5-tetrahydrodipicolinate + NADP(+) + H2O = (2S,4S)-4-hydroxy-2,3,4,5-tetrahydrodipicolinate + NADPH + H(+). It functions in the pathway amino-acid biosynthesis; L-lysine biosynthesis via DAP pathway; (S)-tetrahydrodipicolinate from L-aspartate: step 4/4. Its function is as follows. Catalyzes the conversion of 4-hydroxy-tetrahydrodipicolinate (HTPA) to tetrahydrodipicolinate. The protein is 4-hydroxy-tetrahydrodipicolinate reductase of Streptococcus gordonii (strain Challis / ATCC 35105 / BCRC 15272 / CH1 / DL1 / V288).